A 182-amino-acid polypeptide reads, in one-letter code: Vacuolar protein sorting-associated protein 29 (182 aa).

Lysine 50 carries the N6-acetyllysine modification.

It belongs to the VPS29 family. Component of the commander complex consisting of the CCC subcomplex and the retriever subcomplex. Component of the heterotrimeric retriever complex formed by VPS26C, VPS29 and VPS35L; within the complex interacts with VPS35L. Component of the heterotrimeric retromer cargo-selective complex (CSC), also described as vacuolar protein sorting subcomplex (VPS), formed by VPS26 (VPS26A or VPS26B), VPS29 and VPS35. The CSC has a highly elongated structure with VPS26 and VPS29 binding independently at opposite distal ends of VPS35 as central platform. The CSC is believed to associate with variable sorting nexins to form functionally distinct retromer complex variants. The originally described retromer complex (also called SNX-BAR retromer) is a pentamer containing the CSC and a heterodimeric membrane-deforming subcomplex formed between SNX1 or SNX2 and SNX5 or SNX6 (also called SNX-BAR subcomplex); the respective CSC and SNX-BAR subcomplexes associate with low affinity. The CSC associates with SNX3 to form a SNX3-retromer complex. The CSC associates with SNX27, the WASH complex and the SNX-BAR subcomplex to form the SNX27-retromer complex. Interacts with VPS26A, VPS35, SNX1, SNX2, SNX3, SNX27, WASHC5. Interacts with TBC1D5; this interaction is blocked by VPS35L in the retriever complex. Interacts with SNX17; the interaction is indirect; SNX17 (via its C-terminus) interacts with the retriever complex (via VPS26C and VPS35L). Interacts with VPS26B and ANKRD27.

It is found in the cytoplasm. Its subcellular location is the membrane. The protein resides in the endosome membrane. The protein localises to the early endosome. It localises to the late endosome. In terms of biological role, component of the commander complex that is essential for endosomal recycling of transmembrane cargos; the commander complex is composed of the CCC subcomplex and the retriever subcomplex. Component of the retriever complex, which is a heterotrimeric complex related to retromer cargo-selective complex (CSC) and essential for retromer-independent retrieval and recycling of numerous cargos such as integrin alpha-5/beta-1 (ITGA5:ITGB1). Component of the retromer cargo-selective complex (CSC). The CSC is believed to be the core functional component of retromer or respective retromer complex variants acting to prevent missorting of selected transmembrane cargo proteins into the lysosomal degradation pathway. The recruitment of the CSC to the endosomal membrane involves RAB7A and SNX3. The SNX-BAR retromer mediates retrograde transport of cargo proteins from endosomes to the trans-Golgi network (TGN) and is involved in endosome-to-plasma membrane transport for cargo protein recycling. The SNX3-retromer mediates the retrograde endosome-to-TGN transport of WLS distinct from the SNX-BAR retromer pathway. The SNX27-retromer is believed to be involved in endosome-to-plasma membrane trafficking and recycling of a broad spectrum of cargo proteins. The CSC seems to act as recruitment hub for other proteins, such as the WASH complex and TBC1D5. Required to regulate transcytosis of the polymeric immunoglobulin receptor (pIgR-pIgA). In the endosomes, retriever complex drives the retrieval and recycling of NxxY-motif-containing cargo proteins by coupling to SNX17, a cargo essential for the homeostatic maintenance of numerous cell surface proteins associated with processes that include cell migration, cell adhesion, nutrient supply and cell signaling. The recruitment of the retriever complex to the endosomal membrane involves CCC and WASH complexes. Involved in GLUT1 endosome-to-plasma membrane trafficking; the function is dependent of association with ANKRD27. This chain is Vacuolar protein sorting-associated protein 29 (VPS29), found in Pongo abelii (Sumatran orangutan).